The sequence spans 159 residues: Protein-export protein SecB (159 aa).

The protein belongs to the SecB family. As to quaternary structure, homotetramer, a dimer of dimers. One homotetramer interacts with 1 SecA dimer.

The protein resides in the cytoplasm. Functionally, one of the proteins required for the normal export of preproteins out of the cell cytoplasm. It is a molecular chaperone that binds to a subset of precursor proteins, maintaining them in a translocation-competent state. It also specifically binds to its receptor SecA. The sequence is that of Protein-export protein SecB from Bartonella bacilliformis (strain ATCC 35685 / KC583 / Herrer 020/F12,63).